Reading from the N-terminus, the 318-residue chain is Probable serine/threonine-protein kinase MRK1 homolog (318 aa).

Residues 40–313 form the Protein kinase domain; it reads YRYVEMIGRG…ASELLRKQFF (274 aa). Residues 46–54 and lysine 68 each bind ATP; that span reads IGRGSFGVV. The active-site Proton acceptor is the aspartate 159.

The protein belongs to the protein kinase superfamily. CMGC Ser/Thr protein kinase family. GSK-3 subfamily.

The protein resides in the cytoplasm. The protein localises to the nucleus. It carries out the reaction L-seryl-[protein] + ATP = O-phospho-L-seryl-[protein] + ADP + H(+). The enzyme catalyses L-threonyl-[protein] + ATP = O-phospho-L-threonyl-[protein] + ADP + H(+). In terms of biological role, may play a role in the initiation and completion of mitosis. The chain is Probable serine/threonine-protein kinase MRK1 homolog (MRK1) from Encephalitozoon cuniculi (strain GB-M1) (Microsporidian parasite).